Here is a 152-residue protein sequence, read N- to C-terminus: MFAVVRMRGTVDVHRKIKETLKMLRLHKRYHCVVIPDTPSYRGMLQVVKDYVAYGEINAETLALLLRLRGRLTGNRKLTDEYVKEKTGYETIEEFAKAVVEGKASLKDLPDLKPVFRLHPPRKGIKNIKWHYPRGNLGYHGEEINRLLYKMR.

This sequence belongs to the universal ribosomal protein uL30 family. In terms of assembly, part of the 50S ribosomal subunit.

In Archaeoglobus fulgidus (strain ATCC 49558 / DSM 4304 / JCM 9628 / NBRC 100126 / VC-16), this protein is Large ribosomal subunit protein uL30.